Here is a 448-residue protein sequence, read N- to C-terminus: Na(+)-malate symporter (448 aa).

11 consecutive transmembrane segments (helical) span residues 31–51 (IGVI…LAAY), 60–80 (LGGF…GQRI), 86–106 (IGGP…YNVL), 123–143 (FLYF…NRIV), 153–173 (VPLV…GFIF), 182–202 (FFVV…PLSI), 214–234 (VFVS…IICA), 276–293 (LMGA…FGGL), 297–319 (FIFI…ANIL), 333–353 (FISS…FIPL), and 359–379 (VISI…IGSG).

It belongs to the 2-hydroxycarboxylate transporter (2-HCT) (TC 2.A.24) family.

The protein localises to the cell membrane. Its function is as follows. Acts as a Na(+)-malate symporter, as it catalyzes malate-dependent uptake of Na(+) and Na(+)-dependent uptake of malate. The polypeptide is Na(+)-malate symporter (Bacillus subtilis (strain 168)).